The chain runs to 519 residues: 2,3-bisphosphoglycerate-independent phosphoglycerate mutase (519 aa).

Residues D9 and S60 each coordinate Mn(2+). The active-site Phosphoserine intermediate is the S60. Positions 76 to 91 are enriched in basic and acidic residues; the sequence is DSARVSDSIARSRGEA. Positions 76–102 are disordered; sequence DSARVSDSIARSRGEAPPDDDAQDPPF. Substrate is bound by residues H134, 163 to 164, R195, R201, 267 to 270, and K341; these read RD and RSDR. Mn(2+)-binding residues include D408, H412, D449, H450, and H466.

Belongs to the BPG-independent phosphoglycerate mutase family. Mn(2+) serves as cofactor.

The enzyme catalyses (2R)-2-phosphoglycerate = (2R)-3-phosphoglycerate. It participates in carbohydrate degradation; glycolysis; pyruvate from D-glyceraldehyde 3-phosphate: step 3/5. Catalyzes the interconversion of 2-phosphoglycerate and 3-phosphoglycerate. This is 2,3-bisphosphoglycerate-independent phosphoglycerate mutase from Haloarcula marismortui (strain ATCC 43049 / DSM 3752 / JCM 8966 / VKM B-1809) (Halobacterium marismortui).